A 130-amino-acid polypeptide reads, in one-letter code: Fluoride-specific ion channel FluC (130 aa).

The next 4 helical transmembrane spans lie at 9-29, 39-59, 71-91, and 104-124; these read LAIILGAIPGALARYYATIFL, YATFLINFSGCVGMGLVVTLA, LLLAVGFLGSYTTFSTYALEV, and VLYGLGSLGIGTIGVLLGSLI. G79 and T82 together coordinate Na(+).

The protein belongs to the fluoride channel Fluc/FEX (TC 1.A.43) family.

It localises to the cell inner membrane. It carries out the reaction fluoride(in) = fluoride(out). Na(+) is not transported, but it plays an essential structural role and its presence is essential for fluoride channel function. Functionally, fluoride-specific ion channel. Important for reducing fluoride concentration in the cell, thus reducing its toxicity. The protein is Fluoride-specific ion channel FluC of Synechocystis sp. (strain ATCC 27184 / PCC 6803 / Kazusa).